The primary structure comprises 201 residues: Molybdenum cofactor guanylyltransferase (201 aa).

GTP-binding positions include 15 to 17, Lys28, Asp74, and Asp104; that span reads LCG. Position 104 (Asp104) interacts with Mg(2+).

The protein belongs to the MobA family. As to quaternary structure, monomer. Mg(2+) serves as cofactor.

It localises to the cytoplasm. It catalyses the reaction Mo-molybdopterin + GTP + H(+) = Mo-molybdopterin guanine dinucleotide + diphosphate. Transfers a GMP moiety from GTP to Mo-molybdopterin (Mo-MPT) cofactor (Moco or molybdenum cofactor) to form Mo-molybdopterin guanine dinucleotide (Mo-MGD) cofactor. The chain is Molybdenum cofactor guanylyltransferase from Ectopseudomonas mendocina (strain ymp) (Pseudomonas mendocina).